A 497-amino-acid polypeptide reads, in one-letter code: Guanosine-5'-triphosphate,3'-diphosphate pyrophosphatase (497 aa).

It belongs to the GppA/Ppx family. GppA subfamily.

The catalysed reaction is guanosine 3'-diphosphate 5'-triphosphate + H2O = guanosine 3',5'-bis(diphosphate) + phosphate + H(+). The protein operates within purine metabolism; ppGpp biosynthesis; ppGpp from GTP: step 2/2. Functionally, catalyzes the conversion of pppGpp to ppGpp. Guanosine pentaphosphate (pppGpp) is a cytoplasmic signaling molecule which together with ppGpp controls the 'stringent response', an adaptive process that allows bacteria to respond to amino acid starvation, resulting in the coordinated regulation of numerous cellular activities. The chain is Guanosine-5'-triphosphate,3'-diphosphate pyrophosphatase from Aliivibrio fischeri (strain ATCC 700601 / ES114) (Vibrio fischeri).